The chain runs to 162 residues: UPF0114 protein SO_3997 (162 aa).

The next 3 membrane-spanning stretches (helical) occupy residues 10–32 (YASR…GLGI), 53–75 (LVLV…MVMF), and 136–156 (IMWY…MGYL).

This sequence belongs to the UPF0114 family.

It is found in the cell membrane. The polypeptide is UPF0114 protein SO_3997 (Shewanella oneidensis (strain ATCC 700550 / JCM 31522 / CIP 106686 / LMG 19005 / NCIMB 14063 / MR-1)).